The chain runs to 101 residues: MARPLEEALDVIVSTFHKYSGKEGDKFKLNKTELKELLTRELPSFLGKRTDEAAFQKVMSNLDSNRDNEVDFQEYCVFLSCIAMMCNEFFEGCPDKEPRKK.

N-acetylalanine is present on A2. EF-hand domains lie at 12 to 47 (IVSTFHKYSGKEGDKFKLNKTELKELLTRELPSFLG) and 50 to 85 (TDEAAFQKVMSNLDSNRDNEVDFQEYCVFLSCIAMM). Residues K28 and E33 each contribute to the Ca(2+) site. K35 carries the post-translational modification N6-acetyllysine. Ca(2+)-binding residues include D63, N65, D67, E69, and E74.

The protein belongs to the S-100 family. Homodimer. Interacts with PPFIBP1 in a calcium-dependent mode. Interacts with PGLYRP1; this complex acts as a chemoattractant that promotes lymphocyte movement. Interacts with MYH9; this interaction increases cell motility. Interacts with Annexin 2/ANXA2. Interacts with TP53; this interaction promotes TP53 degradation. Interacts with CCR5 and CXCR3. Interacts with FCGR3A; this interaction inhibits PKC-dependent phosphorylation of FCGR3A. As to expression, specifically expressed in different metastatic cells.

It localises to the secreted. Its subcellular location is the nucleus. The protein localises to the cytoplasm. In terms of biological role, calcium-binding protein that plays a role in various cellular processes including motility, angiogenesis, cell differentiation, apoptosis, and autophagy. Increases cell motility and invasiveness by interacting with non-muscle myosin heavy chain (NMMHC) IIA/MYH9. Mechanistically, promotes filament depolymerization and increases the amount of soluble myosin-IIA, resulting in the formation of stable protrusions facilitating chemotaxis. Also modulates the pro-apoptotic function of TP53 by binding to its C-terminal transactivation domain within the nucleus and reducing its protein levels. Within the extracellular space, stimulates cytokine production including granulocyte colony-stimulating factor and CCL24 from T-lymphocytes. In addition, stimulates T-lymphocyte chemotaxis by acting as a chemoattractant complex with PGLYRP1 that promotes lymphocyte migration via CCR5 and CXCR3 receptors. This chain is Protein S100-A4 (S100a4), found in Mus musculus (Mouse).